Here is a 1050-residue protein sequence, read N- to C-terminus: Inositol hexakisphosphate kinase 1 (1050 aa).

Disordered stretches follow at residues 87 to 117, 129 to 177, 269 to 319, and 396 to 423; these read KITR…LSSS, PAIK…IQNV, RQEN…DNEH, and SDLD…NNND. S150 bears the Phosphoserine mark. Positions 156 to 173 are enriched in polar residues; the sequence is KQQSHQPQVLHHQTSLKP. The segment covering 290–306 has biased composition (basic and acidic residues); that stretch reads ESIKEKPNTFEQDKEGE. A compositionally biased stretch (acidic residues) spans 307-316; that stretch reads QADEEEDEGD. Residue S396 is modified to Phosphoserine. The span at 402–417 shows a compositional bias: basic and acidic residues; sequence NNGKNDTSNENKDIEV. S469 carries the phosphoserine modification. The segment covering 508–522 has biased composition (low complexity); the sequence is NDSYFSSSSSHNSCS. Disordered regions lie at residues 508–539 and 562–625; these read NDSY…DSGS and RKRN…PNLQ. Phosphoserine occurs at positions 537, 539, 566, 583, 589, 646, 664, and 670. Polar residues predominate over residues 566-624; sequence SNTTTMGNHNARLGSSPSFLTQKSRASSHDASNTSMKTLGDSSSQASLQMDDSKVNPNL. 772–780 contacts substrate; that stretch reads PCALDLKMG.

It belongs to the inositol phosphokinase (IPK) family.

Its subcellular location is the cytoplasm. It catalyses the reaction 1D-myo-inositol hexakisphosphate + ATP = 5-diphospho-1D-myo-inositol 1,2,3,4,6-pentakisphosphate + ADP. The enzyme catalyses 1-diphospho-1D-myo-inositol 2,3,4,5,6-pentakisphosphate + ATP + H(+) = 1,5-bis(diphospho)-1D-myo-inositol 2,3,4,6-tetrakisphosphate + ADP. In terms of biological role, converts inositol hexakisphosphate (InsP6) to diphosphoinositol pentakisphosphate (InsP7/PP-InsP5). Involved in phosphate regulation and polyphosphate accumulation. Required for resistance to salt stress, cell wall integrity, vacuole morphogenesis, and telomere maintenance. The polypeptide is Inositol hexakisphosphate kinase 1 (KCS1) (Saccharomyces cerevisiae (strain ATCC 204508 / S288c) (Baker's yeast)).